We begin with the raw amino-acid sequence, 1822 residues long: ADP-ribosylation factor guanine nucleotide-exchange factor sec72 (1822 aa).

2 disordered regions span residues 1-54 (MQDA…NGMD) and 66-126 (DAVV…RASL). Residue Ser-44 is modified to Phosphoserine. The span at 72-84 (DINTEDSSLSPAK) shows a compositional bias: polar residues. The span at 85 to 110 (QENEKSPEGIEQKYQEEDLKDDKKSN) shows a compositional bias: basic and acidic residues. Ser-122 and Ser-125 each carry phosphoserine. The HUS box motif lies at 547 to 551 (NYDCD). Residue Thr-597 is modified to Phosphothreonine. Position 653 is a phosphoserine (Ser-653). A Phosphothreonine modification is found at Thr-654. Ser-669 is modified (phosphoserine). One can recognise an SEC7 domain in the interval 701 to 889 (QFESNKQRKK…GFVYDDILKN (189 aa)). Residues 898 to 1106 (ELAAIAPLMN…NARVRRKNVN (209 aa)) are HDS1 domain. Residue Ser-1110 is modified to Phosphoserine. 2 disordered regions span residues 1111–1131 (NSIRHVSGSTSRSTRTRSLSK) and 1584–1610 (ENENTQLSHKRGGSLPETSRSISTSSI). 2 stretches are compositionally biased toward low complexity: residues 1117 to 1130 (SGSTSRSTRTRSLS) and 1597 to 1610 (SLPETSRSISTSSI). Residues Ser-1606 and Ser-1609 each carry the phosphoserine modification.

The protein resides in the cytoplasm. The protein localises to the golgi apparatus. It localises to the trans-Golgi network. Its subcellular location is the cytoplasmic vesicle. It is found in the COPI-coated vesicle membrane. The protein resides in the COPII-coated vesicle membrane. In terms of biological role, guanine exchange factor that acts as an activator of arf1 at the trans-Golgi net-work and is thus involved in vesicular budding and traffic between compartments of the Golgi apparatus. Activation of Arf (ADP-ribosylation factor) GTPases is essential for vesicle formation via recruitment of cargo adapters and coat proteins necessary for Golgi trafficking. Involved in the resistance to tamoxifen (TAM), an anticancer drug used to treat estrogen receptor (ER)-positive breast cancer. The protein is ADP-ribosylation factor guanine nucleotide-exchange factor sec72 of Schizosaccharomyces pombe (strain 972 / ATCC 24843) (Fission yeast).